The chain runs to 71 residues: Metallothionein-like protein 1 (71 aa).

Belongs to the metallothionein superfamily. Type 15 family.

Functionally, metallothioneins have a high content of cysteine residues that bind various heavy metals. The protein is Metallothionein-like protein 1 (MT1) of Casuarina glauca (Swamp oak).